A 148-amino-acid polypeptide reads, in one-letter code: Snaclec B2 (148 aa).

The first 24 residues, 1–24 (MGRLISVSFGLLVVFLSLSGTGAA), serve as a signal peptide directing secretion. 3 cysteine pairs are disulfide-bonded: Cys-27–Cys-38, Cys-55–Cys-144, and Cys-121–Cys-136. The region spanning 34-145 (YDQHCYKVFD…CRLLGHFVCK (112 aa)) is the C-type lectin domain.

It belongs to the snaclec family. As to quaternary structure, heterodimer; disulfide-linked. As to expression, expressed by the venom gland.

It is found in the secreted. Functionally, interferes with one step of hemostasis (modulation of platelet aggregation, or coagulation cascade, for example). This is Snaclec B2 from Macrovipera lebetinus (Levantine viper).